Here is a 461-residue protein sequence, read N- to C-terminus: Inositol-trisphosphate 3-kinase A (461 aa).

The interval 1 to 29 (MTLPGGPTGMARPGGARPCSPGLERAPRR) is disordered. A required for cytoskeleton location region spans residues 1-133 (MTLPGGPTGM…SVSSTGSSSL (133 aa)). 3 positions are modified to omega-N-methylarginine: arginine 35, arginine 55, and arginine 62. Residues 49 to 160 (AAAGEPRARG…GNVQLEAGED (112 aa)) form a disordered region. Low complexity predominate over residues 118 to 134 (RRLSTSSVSSTGSSSLL). Residues serine 137 and serine 197 each carry the phosphoserine modification. ATP-binding positions include serine 197, lysine 209, 249–251 (QDL), and aspartate 262. Residues lysine 264 and arginine 285 each coordinate substrate. A calmodulin-binding region spans residues 287–295 (DMYKKMLAV). Substrate is bound at residue 312 to 319 (KPRYMQWR). Positions 336 and 416 each coordinate ATP. Lysine 419 contacts substrate.

It belongs to the inositol phosphokinase (IPK) family. As to expression, expressed in brain.

It is found in the cytoplasm. The protein resides in the cytoskeleton. The catalysed reaction is 1D-myo-inositol 1,4,5-trisphosphate + ATP = 1D-myo-inositol 1,3,4,5-tetrakisphosphate + ADP + H(+). Activated by calcium/calmodulin. Catalyzes the phosphorylation of 1D-myo-inositol 1,4,5-trisphosphate (InsP3) into 1D-myo-inositol 1,3,4,5-tetrakisphosphate and participates to the regulation of calcium homeostasis. In Homo sapiens (Human), this protein is Inositol-trisphosphate 3-kinase A.